The sequence spans 452 residues: Cysteine--tRNA ligase (452 aa).

Zn(2+) is bound at residue C35. Positions 37-47 match the 'HIGH' region motif; that stretch reads PTVYDRAHLGN. Zn(2+)-binding residues include C215, H240, and E244. Residues 273 to 277 carry the 'KMSKS' region motif; that stretch reads KMSKS. K276 provides a ligand contact to ATP.

Belongs to the class-I aminoacyl-tRNA synthetase family. In terms of assembly, monomer. Requires Zn(2+) as cofactor.

Its subcellular location is the cytoplasm. It catalyses the reaction tRNA(Cys) + L-cysteine + ATP = L-cysteinyl-tRNA(Cys) + AMP + diphosphate. This chain is Cysteine--tRNA ligase, found in Gluconobacter oxydans (strain 621H) (Gluconobacter suboxydans).